A 250-amino-acid polypeptide reads, in one-letter code: Trypsin (250 aa).

A signal peptide spans 1–15 (MRLLALLLMVGAAVA). The propeptide at 16 to 22 (VPREDGR) is activation peptide. In terms of domain architecture, Peptidase S1 spans 23 to 247 (IIGGHECAAH…FLGWIERTLE (225 aa)). 6 disulfide bridges follow: Cys29–Cys163, Cys47–Cys63, Cys133–Cys236, Cys140–Cys209, Cys174–Cys188, and Cys199–Cys223. Catalysis depends on charge relay system residues His62 and Asp106. Ser203 (charge relay system) is an active-site residue.

Belongs to the peptidase S1 family.

The protein localises to the secreted. It is found in the extracellular space. The enzyme catalyses Preferential cleavage: Arg-|-Xaa, Lys-|-Xaa.. The polypeptide is Trypsin (Pleuronectes platessa (European plaice)).